Here is a 240-residue protein sequence, read N- to C-terminus: Expansin-A20 (240 aa).

Positions 1–21 are cleaved as a signal peptide; that stretch reads MGNILLQLLAVVALCIAPARS. The 105-residue stretch at 41 to 145 folds into the Expansin-like EG45 domain; sequence GGACGYGNLY…QQVKCWRYGG (105 aa). N-linked (GlcNAc...) asparagine glycans are attached at residues Asn-107 and Asn-207. The Expansin-like CBD domain occupies 155–234; the sequence is YFELVLVTNM…GWSFGQTFST (80 aa).

Belongs to the expansin family. Expansin A subfamily.

Its subcellular location is the secreted. The protein localises to the cell wall. It localises to the membrane. Its function is as follows. May cause loosening and extension of plant cell walls by disrupting non-covalent bonding between cellulose microfibrils and matrix glucans. No enzymatic activity has been found. May be required for rapid internodal elongation in deepwater rice during submergence. This is Expansin-A20 (EXPA20) from Oryza sativa subsp. japonica (Rice).